A 107-amino-acid chain; its full sequence is MSGFSLADLERIVDERSKASPEQSWTAKLVAGGQPKAAKKLGEEAIEAVMAAATGDRDNLTYEAADVLYHLLVVLKIAEIPLENVMAELERRTAQSGLKEKANRQSS.

It belongs to the PRA-PH family.

The protein localises to the cytoplasm. It catalyses the reaction 1-(5-phospho-beta-D-ribosyl)-ATP + H2O = 1-(5-phospho-beta-D-ribosyl)-5'-AMP + diphosphate + H(+). It participates in amino-acid biosynthesis; L-histidine biosynthesis; L-histidine from 5-phospho-alpha-D-ribose 1-diphosphate: step 2/9. The protein is Phosphoribosyl-ATP pyrophosphatase of Rhizobium etli (strain CIAT 652).